The sequence spans 165 residues: Large ribosomal subunit protein uL15 (165 aa).

Over residues 1-29 (MTSKKKRQRGSRTHGGGSHKNRRGAGHRG) the composition is skewed to basic residues. Disordered regions lie at residues 1–59 (MTSK…QKVQ) and 133–165 (KVEG…ADEE). Residues 30 to 47 (GRGDAGRDKHEFHNHEPL) are compositionally biased toward basic and acidic residues. Over residues 154 to 165 (AEETEDADADEE) the composition is skewed to acidic residues.

This sequence belongs to the universal ribosomal protein uL15 family. As to quaternary structure, part of the 50S ribosomal subunit. Interacts weakly with proteins L18e and L32e.

Functionally, binds to the 23S rRNA. The polypeptide is Large ribosomal subunit protein uL15 (rpl15) (Haloarcula marismortui (strain ATCC 43049 / DSM 3752 / JCM 8966 / VKM B-1809) (Halobacterium marismortui)).